The chain runs to 351 residues: MASTGSQASDIDEIFGFFNDGEPPTKKPRKLLPSLKTKKPRELVLVIGTGISAAVAPQVPALKSWKGLIQALLDAAIDFDLLEDEESKKFQKCLHEDKNLVHVAHDLIQKLSPRTSNVRSTFFKDCLYEVFDDLESKMEDSGKQLLQSVLHLMENGALVLTTNFDNLLELYAADQGKQLESLDLTDEKKVLEWAQEKRKLSVLHIHGVYTNPSGIVLHPAGYQNVLRNTEVMREIQKLYENKSFLFLGCGWTVDDTTFQALFLEAVKHKSDLEHFMLVRRGDVDEFKKLRENMLDKGIKVISYGDDYADLPEYFKRLTCEISTRGTSAGMVREGQLNGSSAAHSEIRGCST.

Alanine 2 is modified (N-acetylalanine). Serine 9 is modified (phosphoserine).

Belongs to the FAM118 family.

It localises to the nucleus. The protein resides in the cajal body. In terms of biological role, may play a role in Cajal bodies formation. This Homo sapiens (Human) protein is Protein FAM118B (FAM118B).